The chain runs to 621 residues: MVGASRTILSLSLSSSLFTFSKIPHVFPFLRLHKPRFHHAFRPLYSAAATTSSPTTETNVTDPDQLKHTILLERLRLRHLKESAKPPQQRPSSVVGVEEESSIRKKSKKLVENFQELGLSEEVMGALQELNIEVPTEIQCIGIPAVMERKSVVLGSHTGSGKTLAYLLPIVQLMREDEANLGKKTKPRRPRTVVLCPTRELSEQVYRVAKSISHHARFRSILVSGGSRIRPQEDSLNNAIDMVVGTPGRILQHIEEGNMVYGDIAYLVLDEADTMFDRGFGPEIRKFLAPLNQRALKTNDQGFQTVLVTATMTMAVQKLVDEEFQGIEHLRTSTLHKKIANARHDFIKLSGGEDKLEALLQVLEPSLAKGSKVMVFCNTLNSSRAVDHYLSENQISTVNYHGEVPAEQRVENLKKFKDEEGDCPTLVCTDLAARGLDLDVDHVVMFDFPKNSIDYLHRTGRTARMGAKGKVTSLVSRKDQMLAARIEEAMRNNESLESLTTDNVRRDAARTHITQEKGRSVKQIREVSKQRNSRDKPSSSSPPARSTGGKTPVRKSSSSSFSKPRKASSPPEKSSKPKRKILKTVGSRSIAARGKTGSDRRPGKKLSVVGFRGKSSSARAS.

The Q motif signature appears at 112–140 (ENFQELGLSEEVMGALQELNIEVPTEIQC). The Helicase ATP-binding domain maps to 143–330 (IPAVMERKSV…DEEFQGIEHL (188 aa)). Position 156–163 (156–163 (SHTGSGKT)) interacts with ATP. A DEAD box motif is present at residues 270–273 (DEAD). Residues 355–505 (KLEALLQVLE…LESLTTDNVR (151 aa)) form the Helicase C-terminal domain. Residues 497–621 (ESLTTDNVRR…RGKSSSARAS (125 aa)) form a disordered region. A compositionally biased stretch (basic and acidic residues) spans 503-537 (NVRRDAARTHITQEKGRSVKQIREVSKQRNSRDKP). Residues 555–572 (KSSSSSFSKPRKASSPPE) are compositionally biased toward low complexity.

It belongs to the DEAD box helicase family.

It catalyses the reaction ATP + H2O = ADP + phosphate + H(+). The chain is DEAD-box ATP-dependent RNA helicase 39 (RH39) from Arabidopsis thaliana (Mouse-ear cress).